A 265-amino-acid chain; its full sequence is HUWE1-associated protein modifying stress responses (265 aa).

Disordered stretches follow at residues 1-22 (MEEK…HWFS), 140-173 (GKAP…SVET), and 194-219 (ISMR…RRNG). Residues 147–172 (SSRAPPRLAMVSPSRSTPSETSSSVE) are compositionally biased toward low complexity.

It belongs to the HAPSTR1 family. Oligomer.

The protein localises to the nucleus. Its subcellular location is the cytoplasm. Acts as a central player within a network of stress response pathways promoting cellular adaptability. Functions as a negative regulator of TP53/P53 in the cellular response to telomere erosion and probably also DNA damage. The protein is HUWE1-associated protein modifying stress responses of Danio rerio (Zebrafish).